The chain runs to 281 residues: N-acetylmuramic acid 6-phosphate etherase (281 aa).

One can recognise an SIS domain in the interval 63-226; it reads IVPRMKQGGR…TTSVMIQLGR (164 aa). Residue E91 is the Proton donor of the active site. Residue E122 is part of the active site.

The protein belongs to the GCKR-like family. MurNAc-6-P etherase subfamily. Homodimer.

The enzyme catalyses N-acetyl-D-muramate 6-phosphate + H2O = N-acetyl-D-glucosamine 6-phosphate + (R)-lactate. It participates in amino-sugar metabolism; N-acetylmuramate degradation. In terms of biological role, specifically catalyzes the cleavage of the D-lactyl ether substituent of MurNAc 6-phosphate, producing GlcNAc 6-phosphate and D-lactate. In Bacteroides fragilis (strain YCH46), this protein is N-acetylmuramic acid 6-phosphate etherase.